Consider the following 391-residue polypeptide: Multidrug resistance protein MdtL (391 aa).

12 consecutive transmembrane segments (helical) span residues 4–24 (FLIC…MYLV), 42–62 (IAFS…GKVA), 69–89 (PVAI…SLAE), 93–113 (LFLA…VVAF), 131–151 (LLNG…HLIM), 158–178 (SLFW…LFIL), 203–222 (FFLS…LTFV), 245–265 (ALTA…LGIF), 269–289 (TLMI…AVSP), 293–313 (VSLF…GVAM), 331–351 (LGIA…VVGI), and 356–376 (MLIG…MFVA).

Belongs to the major facilitator superfamily. DHA1 family. MdtL (TC 2.A.1.2.22) subfamily.

It localises to the cell inner membrane. Confers resistance to chloramphenicol. This is Multidrug resistance protein MdtL from Escherichia coli (strain SMS-3-5 / SECEC).